A 312-amino-acid polypeptide reads, in one-letter code: Probable cell division protein WhiA (312 aa).

The H-T-H motif DNA-binding region spans 274–308; the sequence is SLKELGTLVPGGPISKSGVNHRLRKLNAYADELRQ.

Belongs to the WhiA family.

Involved in cell division and chromosome segregation. The sequence is that of Probable cell division protein WhiA from Limosilactobacillus fermentum (strain NBRC 3956 / LMG 18251) (Lactobacillus fermentum).